Reading from the N-terminus, the 127-residue chain is Large ribosomal subunit protein uL18 (127 aa).

Positions 1 to 26 (MASTLTVRKSLSDRAKARARRQARGR) are disordered. Residues 17 to 26 (ARARRQARGR) show a composition bias toward basic residues.

It belongs to the universal ribosomal protein uL18 family. As to quaternary structure, part of the 50S ribosomal subunit; part of the 5S rRNA/L5/L18/L25 subcomplex. Contacts the 5S and 23S rRNAs.

This is one of the proteins that bind and probably mediate the attachment of the 5S RNA into the large ribosomal subunit, where it forms part of the central protuberance. This is Large ribosomal subunit protein uL18 from Cutibacterium acnes (strain DSM 16379 / KPA171202) (Propionibacterium acnes).